Here is a 463-residue protein sequence, read N- to C-terminus: Mitochondrial distribution and morphology protein 10 (463 aa).

The protein belongs to the MDM10 family. In terms of assembly, component of the ER-mitochondria encounter structure (ERMES) or MDM complex, composed of MMM1, MDM10, MDM12 and MDM34. Associates with the mitochondrial outer membrane sorting assembly machinery SAM(core) complex.

Its subcellular location is the mitochondrion outer membrane. Functionally, component of the ERMES/MDM complex, which serves as a molecular tether to connect the endoplasmic reticulum and mitochondria. Components of this complex are involved in the control of mitochondrial shape and protein biogenesis and may function in phospholipid exchange. MDM10 is involved in the late assembly steps of the general translocase of the mitochondrial outer membrane (TOM complex). Functions in the TOM40-specific route of the assembly of outer membrane beta-barrel proteins, including the association of TOM40 with the receptor TOM22 and small TOM proteins. Can associate with the SAM(core) complex as well as the MDM12-MMM1 complex, both involved in late steps of the major beta-barrel assembly pathway, that is responsible for biogenesis of all outer membrane beta-barrel proteins. May act as a switch that shuttles between both complexes and channels precursor proteins into the TOM40-specific pathway. Plays a role in mitochondrial morphology and in the inheritance of mitochondria. The chain is Mitochondrial distribution and morphology protein 10 from Candida dubliniensis (strain CD36 / ATCC MYA-646 / CBS 7987 / NCPF 3949 / NRRL Y-17841) (Yeast).